The chain runs to 387 residues: Beta-carotene 4-ketolase (387 aa).

Residues 1–78 (MPHSIDMEDS…GNPTVDDASQ (78 aa)) form a disordered region. Polar residues-rich tracts occupy residues 43 to 53 (NWQTQYHSSEG) and 65 to 78 (DATT…DASQ).

It carries out the reaction echinenone + 2 AH2 + 2 O2 = canthaxanthin + 2 A + 3 H2O. The catalysed reaction is all-trans-beta-carotene + 2 AH2 + 2 O2 = echinenone + 2 A + 3 H2O. The protein operates within carotenoid biosynthesis. Its function is as follows. Involved in the biosynthesis of ketocarotenoids which are powerful anti-oxidative molecules. Catalyzes the conversion of beta-carotene to canthaxanthin via echinenone. This is Beta-carotene 4-ketolase from Protosiphon botryoides (Green alga).